The primary structure comprises 268 residues: Hydroxyethylthiazole kinase (268 aa).

Methionine 45 provides a ligand contact to substrate. Residues arginine 121 and threonine 167 each coordinate ATP. Substrate is bound at residue glycine 194.

This sequence belongs to the Thz kinase family. The cofactor is Mg(2+).

It carries out the reaction 5-(2-hydroxyethyl)-4-methylthiazole + ATP = 4-methyl-5-(2-phosphooxyethyl)-thiazole + ADP + H(+). It functions in the pathway cofactor biosynthesis; thiamine diphosphate biosynthesis; 4-methyl-5-(2-phosphoethyl)-thiazole from 5-(2-hydroxyethyl)-4-methylthiazole: step 1/1. Catalyzes the phosphorylation of the hydroxyl group of 4-methyl-5-beta-hydroxyethylthiazole (THZ). In Bacillus cereus (strain ZK / E33L), this protein is Hydroxyethylthiazole kinase.